A 176-amino-acid chain; its full sequence is Pituitary adenylate cyclase-activating polypeptide (176 aa).

A signal peptide spans 1 to 24 (MTMCSGARLALLVYGIIMHSSVYC). Residues 25–80 (SPAAAGLRFPGIRPEDEAYDEDGNPLQDFYDSDPPGVGGPASTLRDAYALYYPAEE) constitute a propeptide that is removed on maturation. The important for receptor binding stretch occupies residues 150-158 (VKKYLAAVL). At leucine 158 the chain carries Leucine amide. Lysine 169 carries the lysine amide modification. The propeptide occupies 173-176 (IAYL).

It belongs to the glucagon family.

The protein resides in the secreted. Functionally, PACAP is a neuropeptide involved in diverse array of physiological processes through activating the PACAP subfamily of class B1 G protein-coupled receptors: VIP receptor 1 (VIPR1), VIP receptor 2 (VIPR2), and PACAP type I receptor (ADCYAP1R1). Exerts neuroprotective and general cytoprotective effects due to anti-apoptotic, anti-inflammatory, and antioxidant actions. Promotes neuron projection development through the RAPGEF2/Rap1/B-Raf/ERK pathway. In chromaffin cells, induces long-lasting increase of intracellular calcium concentrations and neuroendocrine secretion. Involved in the control of glucose homeostasis, induces insulin secretion by pancreatic beta cells. PACAP exists in two bioactive forms from proteolysis of the same precursor protein, PACAP27 and PACAP38, which differ by eleven amino acid residues in the C-terminus. The chain is Pituitary adenylate cyclase-activating polypeptide (ADCYAP1) from Sus scrofa (Pig).